Here is a 948-residue protein sequence, read N- to C-terminus: RNA polymerase-associated protein RapA (948 aa).

The Helicase ATP-binding domain maps to 164-332 (EVADRIAPRV…FARLRLLDPN (169 aa)). Residue 177-184 (DEVGLGKT) participates in ATP binding. The DEAH box motif lies at 278–281 (DEAH). One can recognise a Helicase C-terminal domain in the interval 473–627 (RVEWLIDTLK…TCPTGNALQH (155 aa)).

This sequence belongs to the SNF2/RAD54 helicase family. RapA subfamily. As to quaternary structure, interacts with the RNAP. Has a higher affinity for the core RNAP than for the holoenzyme. Its ATPase activity is stimulated by binding to RNAP.

In terms of biological role, transcription regulator that activates transcription by stimulating RNA polymerase (RNAP) recycling in case of stress conditions such as supercoiled DNA or high salt concentrations. Probably acts by releasing the RNAP, when it is trapped or immobilized on tightly supercoiled DNA. Does not activate transcription on linear DNA. Probably not involved in DNA repair. The polypeptide is RNA polymerase-associated protein RapA (Pseudomonas syringae pv. tomato (strain ATCC BAA-871 / DC3000)).